Consider the following 541-residue polypeptide: Probable inorganic phosphate transporter 1-12 (541 aa).

Residues 1–26 (MGRQDQQLQVLNALDAAKTQWYHFTA) lie on the Cytoplasmic side of the membrane. A helical transmembrane segment spans residues 27-47 (IIVAGMGFFTDAYDLFCISLV). At 48–70 (TKLLGRIYYTDPASPTPGSLPPN) the chain is on the extracellular side. Residues 71 to 91 (IAAAVNGVALCGTLSGQLFFG) form a helical membrane-spanning segment. The Cytoplasmic portion of the chain corresponds to 92–100 (WLGDKLGRK). The helical transmembrane segment at 101 to 121 (SVYGMTLLLMVICSIASGLSF) threads the bilayer. Over 122-124 (SHT) the chain is Extracellular. The chain crosses the membrane as a helical span at residues 125–145 (PTSVMATLCFFRFWLGFGIGG). At 146–163 (DYPLSATIMSEYANKKTR) the chain is on the cytoplasmic side. Residues 164–184 (GAFIAAVFAMQGFGILAGGVV) form a helical membrane-spanning segment. The Extracellular portion of the chain corresponds to 185–213 (TLAMSAGFQAAFPAPAYEVNAAASTVPQA). The chain crosses the membrane as a helical span at residues 214 to 234 (DYVWRIILMLGALPAILTYYW). The Cytoplasmic portion of the chain corresponds to 235–297 (RMKMPETARY…ARFAKRHGAH (63 aa)). The helical transmembrane segment at 298-318 (LLGTAATWFLVDVAYYSQNLF) threads the bilayer. Over 319 to 349 (QKDIFTSIHWIPKARTMSELEEVFRISRAQT) the chain is Extracellular. The chain crosses the membrane as a helical span at residues 350 to 370 (LIALCGTVPGYWFTVFLIDII). The Cytoplasmic portion of the chain corresponds to 371 to 374 (GRFK). A helical membrane pass occupies residues 375–395 (IQLLGFAGMTAFMLGLAIPYH). Residues 396–403 (HWTMPGNQ) lie on the Extracellular side of the membrane. The helical transmembrane segment at 404–424 (VIFVFLYGFTFFFANFGPNAT) threads the bilayer. The Cytoplasmic segment spans residues 425 to 443 (TFIVPAEIFPARLRSTCHG). The chain crosses the membrane as a helical span at residues 444 to 464 (ISAASGKAGAIIGAFGFLYAA). Over 465-484 (QPQDKAHVDAGYKPGIGVRN) the chain is Extracellular. The helical transmembrane segment at 485 to 505 (ALFVLAGCNLVGFLMTWMLVP) threads the bilayer. The Cytoplasmic segment spans residues 506 to 541 (ESKGKSLEEMSGEADDEEASANGGATAVNSSGVEMV). Residues 512 to 541 (LEEMSGEADDEEASANGGATAVNSSGVEMV) are disordered. The span at 515-524 (MSGEADDEEA) shows a compositional bias: acidic residues. Over residues 532-541 (AVNSSGVEMV) the composition is skewed to polar residues.

Belongs to the major facilitator superfamily. Phosphate:H(+) symporter (TC 2.A.1.9) family.

The protein resides in the membrane. Functionally, high-affinity transporter for external inorganic phosphate. The sequence is that of Probable inorganic phosphate transporter 1-12 (PHT1-12) from Oryza sativa subsp. japonica (Rice).